Consider the following 156-residue polypeptide: Small ribosomal subunit protein uS7 (156 aa).

It belongs to the universal ribosomal protein uS7 family. Part of the 30S ribosomal subunit. Contacts proteins S9 and S11.

One of the primary rRNA binding proteins, it binds directly to 16S rRNA where it nucleates assembly of the head domain of the 30S subunit. Is located at the subunit interface close to the decoding center, probably blocks exit of the E-site tRNA. In Thermosynechococcus vestitus (strain NIES-2133 / IAM M-273 / BP-1), this protein is Small ribosomal subunit protein uS7.